Consider the following 227-residue polypeptide: UPF0173 metal-dependent hydrolase DR_0006 (227 aa).

The protein belongs to the UPF0173 family.

The chain is UPF0173 metal-dependent hydrolase DR_0006 from Deinococcus radiodurans (strain ATCC 13939 / DSM 20539 / JCM 16871 / CCUG 27074 / LMG 4051 / NBRC 15346 / NCIMB 9279 / VKM B-1422 / R1).